Reading from the N-terminus, the 472-residue chain is Na(+)/H(+) antiporter NhaA (472 aa).

11 helical membrane-spanning segments follow: residues 48–68 (AGGI…NSAW), 91–111 (MSLH…VVGL), 129–149 (ALPV…YFAV), 157–177 (AGWG…LVLL), 185–205 (LIIF…LVIA), 210–230 (HEIS…LLLL), 237–257 (HAIP…HSGV), 337–357 (GPWV…GIDF), 374–394 (VCLG…WIAV), 410–430 (LLGV…ISQL), and 443–463 (LGIL…LYFG).

It belongs to the NhaA Na(+)/H(+) (TC 2.A.33) antiporter family.

It localises to the cell inner membrane. It catalyses the reaction Na(+)(in) + 2 H(+)(out) = Na(+)(out) + 2 H(+)(in). Its function is as follows. Na(+)/H(+) antiporter that extrudes sodium in exchange for external protons. The chain is Na(+)/H(+) antiporter NhaA from Syntrophobacter fumaroxidans (strain DSM 10017 / MPOB).